Here is a 728-residue protein sequence, read N- to C-terminus: Myb-related protein A (728 aa).

A disordered region spans residues 1 to 31 (MAGRARSEDEEEDGQFTEHDYDVSLQKGPKK). HTH myb-type domains are found at residues 30–80 (KKPW…HKVL), 81–136 (SPEL…NPDV), and 137–187 (KKSS…KRKV). 3 consecutive DNA-binding regions (H-T-H motif) follow at residues 57–80 (WGVV…HKVL), 109–132 (WSII…HNHL), and 160–183 (WAEI…NSTM). Positions 230-293 (IPRYSSLSHD…RKRVPSGSSL (64 aa)) are transcriptional activation domain. The interval 296-534 (SESYHMGESM…IRRSLMAVTP (239 aa)) is negative regulatory domain.

As to quaternary structure, component of the DREAM complex.

It localises to the nucleus. Its function is as follows. Transcription factor that specifically recognizes the sequence 5'-YAAC[GT]G-3'. Acts as a master regulator of male meiosis by promoting expression of piRNAs. The piRNA metabolic process mediates the repression of transposable elements during meiosis by forming complexes composed of piRNAs and Piwi proteins and governs the methylation and subsequent repression of transposons, which is essential for the germline integrity. In Xenopus laevis (African clawed frog), this protein is Myb-related protein A (mybl1).